Consider the following 204-residue polypeptide: AFG2-interacting ribosome maturation factor (204 aa).

In terms of assembly, part of the 55LCC heterohexameric ATPase complex. Does not associate with pre-60S ribosomal particles.

The protein resides in the nucleus. It is found in the cytoplasm. Part of the 55LCC heterohexameric ATPase complex which is chromatin-associated and promotes replisome proteostasis to maintain replication fork progression and genome stability. Required for replication fork progression, sister chromatid cohesion, and chromosome stability. The ATPase activity is specifically enhanced by replication fork DNA and is coupled to cysteine protease-dependent cleavage of replisome substrates in response to replication fork damage. Uses ATPase activity to process replisome substrates in S-phase, facilitating their proteolytic turnover from chromatin to ensure DNA replication and mitotic fidelity. Involved in the cytoplasmic maturation steps of pre-60S ribosomal particles by promoting the release of shuttling protein RSL24D1/RLP24 from the pre-ribosomal particles. This Xenopus tropicalis (Western clawed frog) protein is AFG2-interacting ribosome maturation factor (airim).